The following is a 244-amino-acid chain: Transcriptional activator protein anr (244 aa).

An a nucleoside 3',5'-cyclic phosphate-binding site is contributed by 21-149; it reads APLCLPLSLT…RLMSREIRDD (129 aa). The HTH crp-type domain maps to 159 to 232; that stretch reads KTADERIATF…GKEVHILDSI (74 aa). Residues 192 to 211 constitute a DNA-binding region (H-T-H motif); it reads RNEIGNYLGLAVETVSRVFT.

In terms of biological role, transcriptional activator of anaerobic gene expression. The polypeptide is Transcriptional activator protein anr (anr) (Pseudomonas aeruginosa (strain ATCC 15692 / DSM 22644 / CIP 104116 / JCM 14847 / LMG 12228 / 1C / PRS 101 / PAO1)).